The chain runs to 319 residues: L-lactate dehydrogenase (319 aa).

NAD(+) contacts are provided by residues 10 to 11 (RV), aspartate 32, arginine 37, tyrosine 62, and 76 to 77 (GV). Substrate contacts are provided by residues glutamine 79, arginine 85, and 117-120 (NPVD). NAD(+) contacts are provided by residues 115–117 (VTN) and serine 140. Substrate is bound at residue 145-148 (DTAR). Beta-D-fructose 1,6-bisphosphate is bound by residues arginine 150 and histidine 165. The Proton acceptor role is filled by histidine 172. Tyrosine 217 is modified (phosphotyrosine). Threonine 226 contributes to the substrate binding site.

Belongs to the LDH/MDH superfamily. LDH family. As to quaternary structure, homotetramer.

The protein localises to the cytoplasm. The catalysed reaction is (S)-lactate + NAD(+) = pyruvate + NADH + H(+). The protein operates within fermentation; pyruvate fermentation to lactate; (S)-lactate from pyruvate: step 1/1. Allosterically activated by fructose 1,6-bisphosphate (FBP). Inactivated by Mn(2+), Co(2+), Cd(2+) and Zn(2+). In terms of biological role, catalyzes the conversion of lactate to pyruvate. It is stereospecific for L(+)-lactate. In Thermotoga maritima (strain ATCC 43589 / DSM 3109 / JCM 10099 / NBRC 100826 / MSB8), this protein is L-lactate dehydrogenase.